Here is a 666-residue protein sequence, read N- to C-terminus: Protein OS-9 (666 aa).

An N-terminal signal peptide occupies residues Met-1–Ser-30. An MRH domain is found at Ala-108–His-230. Cys-110 and Cys-123 are oxidised to a cystine. A mannooligosaccharide derivative contacts are provided by Trp-117, Trp-118, and Gln-130. N-linked (GlcNAc...) asparagine glycosylation occurs at Asn-177. 2 cysteine pairs are disulfide-bonded: Cys-181–Cys-216 and Cys-196–Cys-228. The a mannooligosaccharide derivative site is built by Asp-182, Arg-188, Glu-212, and Tyr-218. Disordered regions lie at residues Arg-261 to Val-356, Glu-370 to Glu-449, Glu-505 to Val-540, and Glu-631 to Phe-666. Basic and acidic residues-rich tracts occupy residues Ala-263–His-281 and Pro-294–Phe-310. Over residues Gln-320 to Gln-332 the composition is skewed to low complexity. Basic and acidic residues-rich tracts occupy residues Glu-370–Lys-379 and Pro-395–Val-412. The span at Glu-413–Gln-429 shows a compositional bias: acidic residues. Residues Glu-434 to Glu-449 show a composition bias toward basic and acidic residues. A compositionally biased stretch (basic and acidic residues) spans Glu-631–Tyr-646. The span at Asp-657–Phe-666 shows a compositional bias: acidic residues.

It belongs to the OS-9 family. In terms of assembly, component of the HRD1 complex, which comprises at least SYNV1/HRD1, DERL1/2, FAM8A1, HERPUD1/HERP, OS9, SEL1L and UBE2J1. FAM8A1 is stabilized by interaction with SYNV1, which prevents its proteasomal degradation. OS9 and UBE2J1 recruitment to the complex may be mediated by SEL1L. Through this complex, may interact with ERLEC1 and HSPA5. Interacts (via C-terminus) with CPNE6 (via second C2 domain); this interaction occurs in a calcium-dependent manner in vitro. Interacts with CREB3. Post-translationally, intramolecular disulfide bonds.

It is found in the endoplasmic reticulum lumen. Functionally, lectin component of the HRD1 complex, which functions in endoplasmic reticulum (ER) quality control and ER-associated degradation (ERAD). Specifically recognizes and binds improperly folded glycoproteins as well as hyperglycosylated proteins, retain them in the ER, and transfers them to the ubiquitination machinery and promote their degradation. Possible targets include TRPV4 as well as hyperglycosylated HSP90B1. The chain is Protein OS-9 (Os9) from Rattus norvegicus (Rat).